Consider the following 294-residue polypeptide: Arsenical-resistance protein ARR1 (294 aa).

Basic residues predominate over residues 1–11 (MAKPRGRKGGR). Residues 1-29 (MAKPRGRKGGRKPSLTPPKNKRAAQLRAS) are disordered. The segment at 22–45 (RAAQLRASQNAFRKRKLERLEELE) is basic motif. A bZIP domain is found at 22–72 (RAAQLRASQNAFRKRKLERLEELEKKEAQLTVTNDQIHILKKENELLHFML). The segment at 44–72 (LEKKEAQLTVTNDQIHILKKENELLHFML) is leucine-zipper. Arsenite is bound by residues cysteine 132, cysteine 137, and cysteine 274.

Belongs to the bZIP family. YAP subfamily. As to quaternary structure, homodimer. Post-translationally, phosphorylation by HOG1 promotes nuclear localization in the presence of arsenic.

Its subcellular location is the cytoplasm. It localises to the nucleus. With respect to regulation, transcriptional activity is controlled by regulated degradation by the ubiquitin-proteasome pathway in absence of arsenic. Arsenic-exposure results in stabilization and increased transcriptional activity. Its function is as follows. Transcription activator required for resistance to arsenic compounds and for a regulated expression of ACR2, ACR3 and YCF1. The sequence is that of Arsenical-resistance protein ARR1 from Saccharomyces cerevisiae (strain ATCC 204508 / S288c) (Baker's yeast).